The primary structure comprises 175 residues: Hypoxanthine-guanine phosphoribosyltransferase (175 aa).

Residues lysine 40 and glycine 41 each coordinate diphosphate. Mg(2+) is bound by residues glutamate 96 and aspartate 97. Aspartate 100 acts as the Proton acceptor in catalysis. Residues lysine 128, 149–150 (FL), and aspartate 156 contribute to the GMP site. Arginine 162 serves as a coordination point for diphosphate.

It belongs to the purine/pyrimidine phosphoribosyltransferase family. It depends on Mg(2+) as a cofactor.

It localises to the cytoplasm. The enzyme catalyses IMP + diphosphate = hypoxanthine + 5-phospho-alpha-D-ribose 1-diphosphate. The catalysed reaction is GMP + diphosphate = guanine + 5-phospho-alpha-D-ribose 1-diphosphate. It functions in the pathway purine metabolism; IMP biosynthesis via salvage pathway; IMP from hypoxanthine: step 1/1. Its pathway is purine metabolism; GMP biosynthesis via salvage pathway; GMP from guanine: step 1/1. Its function is as follows. Purine salvage pathway enzyme that catalyzes the transfer of the ribosyl-5-phosphate group from 5-phospho-alpha-D-ribose 1-diphosphate (PRPP) to the N9 position of the 6-oxopurines hypoxanthine and guanine to form the corresponding ribonucleotides IMP (inosine 5'-monophosphate) and GMP (guanosine 5'-monophosphate), with the release of PPi. The polypeptide is Hypoxanthine-guanine phosphoribosyltransferase (hpt) (Mycoplasma genitalium (strain ATCC 33530 / DSM 19775 / NCTC 10195 / G37) (Mycoplasmoides genitalium)).